A 668-amino-acid polypeptide reads, in one-letter code: tRNA 5-methylaminomethyl-2-thiouridine biosynthesis bifunctional protein MnmC (668 aa).

Positions 1-245 (MKHYSIQPAN…KREMLCGVME (245 aa)) are tRNA (mnm(5)s(2)U34)-methyltransferase. Residues 270-668 (IGGGIASALL…LLKGKAVKAG (399 aa)) are FAD-dependent cmnm(5)s(2)U34 oxidoreductase.

In the N-terminal section; belongs to the methyltransferase superfamily. tRNA (mnm(5)s(2)U34)-methyltransferase family. The protein in the C-terminal section; belongs to the DAO family. Requires FAD as cofactor.

It localises to the cytoplasm. It catalyses the reaction 5-aminomethyl-2-thiouridine(34) in tRNA + S-adenosyl-L-methionine = 5-methylaminomethyl-2-thiouridine(34) in tRNA + S-adenosyl-L-homocysteine + H(+). In terms of biological role, catalyzes the last two steps in the biosynthesis of 5-methylaminomethyl-2-thiouridine (mnm(5)s(2)U) at the wobble position (U34) in tRNA. Catalyzes the FAD-dependent demodification of cmnm(5)s(2)U34 to nm(5)s(2)U34, followed by the transfer of a methyl group from S-adenosyl-L-methionine to nm(5)s(2)U34, to form mnm(5)s(2)U34. This Escherichia coli O9:H4 (strain HS) protein is tRNA 5-methylaminomethyl-2-thiouridine biosynthesis bifunctional protein MnmC.